The chain runs to 306 residues: Methionyl-tRNA formyltransferase (306 aa).

(6S)-5,6,7,8-tetrahydrofolate is bound at residue 110–113 (SLLP).

Belongs to the Fmt family.

The enzyme catalyses L-methionyl-tRNA(fMet) + (6R)-10-formyltetrahydrofolate = N-formyl-L-methionyl-tRNA(fMet) + (6S)-5,6,7,8-tetrahydrofolate + H(+). Attaches a formyl group to the free amino group of methionyl-tRNA(fMet). The formyl group appears to play a dual role in the initiator identity of N-formylmethionyl-tRNA by promoting its recognition by IF2 and preventing the misappropriation of this tRNA by the elongation apparatus. The sequence is that of Methionyl-tRNA formyltransferase from Brucella suis (strain ATCC 23445 / NCTC 10510).